A 232-amino-acid polypeptide reads, in one-letter code: Leucyl/phenylalanyl-tRNA--protein transferase (232 aa).

It belongs to the L/F-transferase family.

The protein localises to the cytoplasm. The catalysed reaction is N-terminal L-lysyl-[protein] + L-leucyl-tRNA(Leu) = N-terminal L-leucyl-L-lysyl-[protein] + tRNA(Leu) + H(+). It carries out the reaction N-terminal L-arginyl-[protein] + L-leucyl-tRNA(Leu) = N-terminal L-leucyl-L-arginyl-[protein] + tRNA(Leu) + H(+). It catalyses the reaction L-phenylalanyl-tRNA(Phe) + an N-terminal L-alpha-aminoacyl-[protein] = an N-terminal L-phenylalanyl-L-alpha-aminoacyl-[protein] + tRNA(Phe). Its function is as follows. Functions in the N-end rule pathway of protein degradation where it conjugates Leu, Phe and, less efficiently, Met from aminoacyl-tRNAs to the N-termini of proteins containing an N-terminal arginine or lysine. This chain is Leucyl/phenylalanyl-tRNA--protein transferase, found in Nitrosospira multiformis (strain ATCC 25196 / NCIMB 11849 / C 71).